The following is a 765-amino-acid chain: Probable glycosyltransferase STELLO2 (765 aa).

The Cytoplasmic portion of the chain corresponds to 1–43 (MLVQDRVAPKPPKSRIRELPSRDRFAEPKILDFSSWVSDNVYR). Residues 44-64 (IVIIFLFIVTVAAFFFLYNTT) traverse the membrane as a helical segment. Topologically, residues 65–765 (DTASLLCFQS…EGDPLLMELV (701 aa)) are lumenal. N-linked (GlcNAc...) asparagine glycosylation is found at N235 and N723.

This sequence belongs to the STELLO family. In terms of assembly, homo- and heterodimer with STL1. Interacts with CESA1, CESA3, CESA4, CESA6, CESA7 and CESA8, but not with GOT1. Expressed in cells that are expanding or producing secondary cell walls.

The protein localises to the golgi apparatus membrane. Its function is as follows. Probable glycosyltransferase regulating the assembly and trafficking of cellulose synthase complexes. This Arabidopsis thaliana (Mouse-ear cress) protein is Probable glycosyltransferase STELLO2.